A 321-amino-acid polypeptide reads, in one-letter code: uncharacterized protein (321 aa).

Over 1–6 (MDIIRK) the chain is Extracellular. The helical transmembrane segment at 7 to 29 (ISHFAGQTFGIWVIVFAVLGFSF) threads the bilayer. At 30–34 (PSLFT) the chain is on the cytoplasmic side. The helical transmembrane segment at 35 to 57 (WISSYITIFLGIIMFGMGLTLQA) threads the bilayer. At 58 to 69 (DDFKELVRKPWQ) the chain is on the extracellular side. A helical transmembrane segment spans residues 70–92 (VIIGVIAQYTIMPLVAFGLAFGL). Over 93–97 (HLPAE) the chain is Cytoplasmic. Residues 98 to 120 (IAVGVILVGCCPGGTASNVMTFL) traverse the membrane as a helical segment. Residues 121–129 (AKGNTALSV) are Extracellular-facing. The chain crosses the membrane as a helical span at residues 130 to 150 (AVTTISTLLAPVVTPLLIMLF). Topologically, residues 151-159 (AKEWLPVSP) are cytoplasmic. The chain crosses the membrane as a helical span at residues 160 to 180 (GSLFISILQAVLFPIIAGLIV). Topologically, residues 181 to 190 (KMFFRKQVAK) are extracellular. The helical transmembrane segment at 191–211 (AVHALPLVSVIGIVAIVSAVV) threads the bilayer. Residues 212-221 (SGNRENLLQS) lie on the Cytoplasmic side of the membrane. Residues 222–242 (GLLIFSVVILHNGIGYLLGFL) form a helical membrane-spanning segment. Residues 243 to 267 (CAKLLKMDYPSQKAIAIEVGMQNSG) are Extracellular-facing. A helical membrane pass occupies residues 268-288 (LGAALATAHFSPLSAVPSAIF). At 289 to 321 (SVWHNLSGSMLATYWSKKVKKKQAGSKSSNLSL) the chain is on the cytoplasmic side.

It belongs to the bile acid:sodium symporter (BASS) (TC 2.A.28) family.

The protein localises to the cell membrane. This is an uncharacterized protein from Bacillus subtilis (strain 168).